A 355-amino-acid chain; its full sequence is tRNA-specific 2-thiouridylase MnmA 1 (355 aa).

6 to 13 (LLSGGVDS) lines the ATP pocket. Positions 92 to 94 (NPD) are interaction with target base in tRNA. The Nucleophile role is filled by C97. C97 and C192 are disulfide-bonded. G120 contributes to the ATP binding site. Residues 142–144 (KDQ) are interaction with tRNA. C192 functions as the Cysteine persulfide intermediate in the catalytic mechanism.

This sequence belongs to the MnmA/TRMU family.

Its subcellular location is the cytoplasm. The enzyme catalyses S-sulfanyl-L-cysteinyl-[protein] + uridine(34) in tRNA + AH2 + ATP = 2-thiouridine(34) in tRNA + L-cysteinyl-[protein] + A + AMP + diphosphate + H(+). Its function is as follows. Catalyzes the 2-thiolation of uridine at the wobble position (U34) of tRNA, leading to the formation of s(2)U34. This is tRNA-specific 2-thiouridylase MnmA 1 from Bacteroides thetaiotaomicron (strain ATCC 29148 / DSM 2079 / JCM 5827 / CCUG 10774 / NCTC 10582 / VPI-5482 / E50).